Consider the following 280-residue polypeptide: Nocamycin O-methyltransferase (280 aa).

This sequence belongs to the methyltransferase superfamily.

The catalysed reaction is nocamycin E + S-adenosyl-L-methionine = nocamycin I + S-adenosyl-L-homocysteine. It functions in the pathway antibiotic biosynthesis. Functionally, involved in the biosynthesis of nocamycin I and nocamycin II. Catalyzes the methylation of nocamycin E to yield nocamycin I. The chain is Nocamycin O-methyltransferase from Saccharothrix syringae (Nocardiopsis syringae).